A 194-amino-acid chain; its full sequence is Putative manganese efflux pump MntP (194 aa).

6 helical membrane-spanning segments follow: residues 3-23, 37-57, 65-85, 112-132, 137-157, and 170-190; these read PITT…AAIG, LYVA…GWLL, IATF…IHMI, LAAT…SMAF, IGIV…FGVM, and AEIV…YEHL.

The protein belongs to the MntP (TC 9.B.29) family.

Its subcellular location is the cell inner membrane. Probably functions as a manganese efflux pump. This is Putative manganese efflux pump MntP from Xylella fastidiosa (strain M23).